Reading from the N-terminus, the 211-residue chain is LexA repressor (211 aa).

The segment at residues Val-29–Asn-49 is a DNA-binding region (H-T-H motif). Residues Ser-131 and Lys-169 each act as for autocatalytic cleavage activity in the active site.

This sequence belongs to the peptidase S24 family. Homodimer.

It catalyses the reaction Hydrolysis of Ala-|-Gly bond in repressor LexA.. Its function is as follows. Represses a number of genes involved in the response to DNA damage (SOS response), including recA and lexA. In the presence of single-stranded DNA, RecA interacts with LexA causing an autocatalytic cleavage which disrupts the DNA-binding part of LexA, leading to derepression of the SOS regulon and eventually DNA repair. This is LexA repressor from Clostridioides difficile (strain 630) (Peptoclostridium difficile).